Consider the following 897-residue polypeptide: Molybdenum import ATP-binding protein ModC 2 (897 aa).

One can recognise an ABC transporter domain in the interval 6 to 236 (RGRIDAAFRG…PALPLAYSRD (231 aa)). Position 38-45 (38-45 (GPSGCGKT)) interacts with ATP. Positions 295-365 (ESSILNILPA…VKGVSLVRAS (71 aa)) constitute a Mop domain. A disordered region spans residues 823–848 (LGDRSVLGPREPDAGAKGRKRQNDPE). A compositionally biased stretch (basic and acidic residues) spans 832–848 (REPDAGAKGRKRQNDPE).

Belongs to the ABC transporter superfamily. Molybdate importer (TC 3.A.1.8) family. The complex is composed of two ATP-binding proteins (ModC), two transmembrane proteins (ModB) and a solute-binding protein (ModA).

Its subcellular location is the cell inner membrane. The catalysed reaction is molybdate(out) + ATP + H2O = molybdate(in) + ADP + phosphate + H(+). Part of the ABC transporter complex ModABC involved in molybdenum import. Responsible for energy coupling to the transport system. This Bradyrhizobium diazoefficiens (strain JCM 10833 / BCRC 13528 / IAM 13628 / NBRC 14792 / USDA 110) protein is Molybdenum import ATP-binding protein ModC 2.